A 243-amino-acid chain; its full sequence is 23S rRNA (guanosine-2'-O-)-methyltransferase RlmB (243 aa).

The S-adenosyl-L-methionine site is built by Gly196, Ile216, and Leu225.

The protein belongs to the class IV-like SAM-binding methyltransferase superfamily. RNA methyltransferase TrmH family. RlmB subfamily. Homodimer.

It localises to the cytoplasm. It catalyses the reaction guanosine(2251) in 23S rRNA + S-adenosyl-L-methionine = 2'-O-methylguanosine(2251) in 23S rRNA + S-adenosyl-L-homocysteine + H(+). Specifically methylates the ribose of guanosine 2251 in 23S rRNA. This chain is 23S rRNA (guanosine-2'-O-)-methyltransferase RlmB, found in Salmonella typhi.